The chain runs to 304 residues: Acetyl-coenzyme A carboxylase carboxyl transferase subunit beta (304 aa).

The 270-residue stretch at 25 to 294 (VWTKCDSCGQ…PSVVESKADT (270 aa)) folds into the CoA carboxyltransferase N-terminal domain. Residues C29, C32, C48, and C51 each coordinate Zn(2+). The C4-type zinc finger occupies 29-51 (CDSCGQVLYRAELERNLEVCPKC).

Belongs to the AccD/PCCB family. In terms of assembly, acetyl-CoA carboxylase is a heterohexamer composed of biotin carboxyl carrier protein (AccB), biotin carboxylase (AccC) and two subunits each of ACCase subunit alpha (AccA) and ACCase subunit beta (AccD). It depends on Zn(2+) as a cofactor.

The protein resides in the cytoplasm. The enzyme catalyses N(6)-carboxybiotinyl-L-lysyl-[protein] + acetyl-CoA = N(6)-biotinyl-L-lysyl-[protein] + malonyl-CoA. It participates in lipid metabolism; malonyl-CoA biosynthesis; malonyl-CoA from acetyl-CoA: step 1/1. In terms of biological role, component of the acetyl coenzyme A carboxylase (ACC) complex. Biotin carboxylase (BC) catalyzes the carboxylation of biotin on its carrier protein (BCCP) and then the CO(2) group is transferred by the transcarboxylase to acetyl-CoA to form malonyl-CoA. The protein is Acetyl-coenzyme A carboxylase carboxyl transferase subunit beta of Yersinia pestis bv. Antiqua (strain Nepal516).